We begin with the raw amino-acid sequence, 347 residues long: Holliday junction branch migration complex subunit RuvB (347 aa).

The interval 1-183 (MTDVPRMVTP…FGIPVRLNFY (183 aa)) is large ATPase domain (RuvB-L). ATP contacts are provided by residues Leu-22, Arg-23, Gly-64, Lys-67, Thr-68, Thr-69, 130–132 (EDF), Arg-173, Tyr-183, and Arg-220. Thr-68 provides a ligand contact to Mg(2+). Residues 184 to 254 (TVDELEKIVS…IADHALGALE (71 aa)) form a small ATPAse domain (RuvB-S) region. Positions 257-347 (AAGLDAMDRR…QFGLFGGEDE (91 aa)) are head domain (RuvB-H). Residues Arg-293, Arg-312, and Arg-317 each coordinate DNA.

This sequence belongs to the RuvB family. Homohexamer. Forms an RuvA(8)-RuvB(12)-Holliday junction (HJ) complex. HJ DNA is sandwiched between 2 RuvA tetramers; dsDNA enters through RuvA and exits via RuvB. An RuvB hexamer assembles on each DNA strand where it exits the tetramer. Each RuvB hexamer is contacted by two RuvA subunits (via domain III) on 2 adjacent RuvB subunits; this complex drives branch migration. In the full resolvosome a probable DNA-RuvA(4)-RuvB(12)-RuvC(2) complex forms which resolves the HJ.

It is found in the cytoplasm. It catalyses the reaction ATP + H2O = ADP + phosphate + H(+). In terms of biological role, the RuvA-RuvB-RuvC complex processes Holliday junction (HJ) DNA during genetic recombination and DNA repair, while the RuvA-RuvB complex plays an important role in the rescue of blocked DNA replication forks via replication fork reversal (RFR). RuvA specifically binds to HJ cruciform DNA, conferring on it an open structure. The RuvB hexamer acts as an ATP-dependent pump, pulling dsDNA into and through the RuvAB complex. RuvB forms 2 homohexamers on either side of HJ DNA bound by 1 or 2 RuvA tetramers; 4 subunits per hexamer contact DNA at a time. Coordinated motions by a converter formed by DNA-disengaged RuvB subunits stimulates ATP hydrolysis and nucleotide exchange. Immobilization of the converter enables RuvB to convert the ATP-contained energy into a lever motion, pulling 2 nucleotides of DNA out of the RuvA tetramer per ATP hydrolyzed, thus driving DNA branch migration. The RuvB motors rotate together with the DNA substrate, which together with the progressing nucleotide cycle form the mechanistic basis for DNA recombination by continuous HJ branch migration. Branch migration allows RuvC to scan DNA until it finds its consensus sequence, where it cleaves and resolves cruciform DNA. This is Holliday junction branch migration complex subunit RuvB from Nitrobacter hamburgensis (strain DSM 10229 / NCIMB 13809 / X14).